Here is a 114-residue protein sequence, read N- to C-terminus: DNA-directed RNA polymerases II, IV and V subunit 9B (114 aa).

Residues cysteine 7, cysteine 10, cysteine 29, cysteine 32, cysteine 76, cysteine 79, cysteine 103, and cysteine 108 each contribute to the Zn(2+) site. A TFIIS-type zinc finger spans residues 72–113 (KAVRCAKCQHGEAVFFQATARGEEGMTLFFVCCNPNCSHRWR).

This sequence belongs to the archaeal RpoM/eukaryotic RPA12/RPB9/RPC11 RNA polymerase family. As to quaternary structure, component of the RNA polymerase II, IV and V complexes. Interacts with NRPD1.

Its subcellular location is the nucleus. The protein resides in the nucleolus. Functionally, DNA-dependent RNA polymerase catalyzes the transcription of DNA into RNA using the four ribonucleoside triphosphates as substrates. Component of RNA polymerase II which synthesizes mRNA precursors and many functional non-coding RNAs. Pol II is the central component of the basal RNA polymerase II transcription machinery. It is composed of mobile elements that move relative to each other. Component of RNA polymerases IV and V which mediate short-interfering RNAs (siRNA) accumulation and subsequent RNA-directed DNA methylation-dependent (RdDM) transcriptional gene silencing (TGS) of endogenous repeated sequences, including transposable elements. Required for RNA silencing. This chain is DNA-directed RNA polymerases II, IV and V subunit 9B (NRPB9B), found in Arabidopsis thaliana (Mouse-ear cress).